A 208-amino-acid chain; its full sequence is Large ribosomal subunit protein uL4 (208 aa).

A disordered region spans residues 44 to 79 (QRQGTHKSKERSEISGSTRKIGRQKGGGGARRGDMN).

The protein belongs to the universal ribosomal protein uL4 family. As to quaternary structure, part of the 50S ribosomal subunit.

One of the primary rRNA binding proteins, this protein initially binds near the 5'-end of the 23S rRNA. It is important during the early stages of 50S assembly. It makes multiple contacts with different domains of the 23S rRNA in the assembled 50S subunit and ribosome. Its function is as follows. Forms part of the polypeptide exit tunnel. The polypeptide is Large ribosomal subunit protein uL4 (Bacteroides thetaiotaomicron (strain ATCC 29148 / DSM 2079 / JCM 5827 / CCUG 10774 / NCTC 10582 / VPI-5482 / E50)).